The following is a 257-amino-acid chain: Hydroxyethylthiazole kinase 1 (257 aa).

A substrate-binding site is contributed by Met41. 2 residues coordinate ATP: Lys117 and Thr162. Residue Gly189 participates in substrate binding.

The protein belongs to the Thz kinase family. It depends on Mg(2+) as a cofactor.

The enzyme catalyses 5-(2-hydroxyethyl)-4-methylthiazole + ATP = 4-methyl-5-(2-phosphooxyethyl)-thiazole + ADP + H(+). It participates in cofactor biosynthesis; thiamine diphosphate biosynthesis; 4-methyl-5-(2-phosphoethyl)-thiazole from 5-(2-hydroxyethyl)-4-methylthiazole: step 1/1. Its function is as follows. Catalyzes the phosphorylation of the hydroxyl group of 4-methyl-5-beta-hydroxyethylthiazole (THZ). The polypeptide is Hydroxyethylthiazole kinase 1 (Oceanobacillus iheyensis (strain DSM 14371 / CIP 107618 / JCM 11309 / KCTC 3954 / HTE831)).